A 255-amino-acid chain; its full sequence is Methylthioribulose-1-phosphate dehydratase (255 aa).

Residue Cys98 participates in substrate binding. Residues His116 and His118 each coordinate Zn(2+). Glu150 functions as the Proton donor/acceptor in the catalytic mechanism. His207 contacts Zn(2+).

Belongs to the aldolase class II family. MtnB subfamily. It depends on Zn(2+) as a cofactor.

Its subcellular location is the cytoplasm. The catalysed reaction is 5-(methylsulfanyl)-D-ribulose 1-phosphate = 5-methylsulfanyl-2,3-dioxopentyl phosphate + H2O. The protein operates within amino-acid biosynthesis; L-methionine biosynthesis via salvage pathway; L-methionine from S-methyl-5-thio-alpha-D-ribose 1-phosphate: step 2/6. Its function is as follows. Catalyzes the dehydration of methylthioribulose-1-phosphate (MTRu-1-P) into 2,3-diketo-5-methylthiopentyl-1-phosphate (DK-MTP-1-P). In Pyricularia oryzae (strain 70-15 / ATCC MYA-4617 / FGSC 8958) (Rice blast fungus), this protein is Methylthioribulose-1-phosphate dehydratase.